The chain runs to 306 residues: Ribonuclease Z (306 aa).

Residues His-63, His-65, Asp-67, His-68, His-142, Asp-213, and His-271 each contribute to the Zn(2+) site. Catalysis depends on Asp-67, which acts as the Proton acceptor.

Belongs to the RNase Z family. In terms of assembly, homodimer. It depends on Zn(2+) as a cofactor.

The catalysed reaction is Endonucleolytic cleavage of RNA, removing extra 3' nucleotides from tRNA precursor, generating 3' termini of tRNAs. A 3'-hydroxy group is left at the tRNA terminus and a 5'-phosphoryl group is left at the trailer molecule.. In terms of biological role, zinc phosphodiesterase, which displays some tRNA 3'-processing endonuclease activity. Probably involved in tRNA maturation, by removing a 3'-trailer from precursor tRNA. This Oceanobacillus iheyensis (strain DSM 14371 / CIP 107618 / JCM 11309 / KCTC 3954 / HTE831) protein is Ribonuclease Z.